Consider the following 543-residue polypeptide: Chaperonin GroEL (543 aa).

Residues 31-34 (TMGP), 88-92 (DGTTT), Gly-415, 479-481 (DAL), and Asp-495 each bind ATP.

It belongs to the chaperonin (HSP60) family. In terms of assembly, forms a cylinder of 14 subunits composed of two heptameric rings stacked back-to-back. Interacts with the co-chaperonin GroES.

Its subcellular location is the cytoplasm. It catalyses the reaction ATP + H2O + a folded polypeptide = ADP + phosphate + an unfolded polypeptide.. Its function is as follows. Together with its co-chaperonin GroES, plays an essential role in assisting protein folding. The GroEL-GroES system forms a nano-cage that allows encapsulation of the non-native substrate proteins and provides a physical environment optimized to promote and accelerate protein folding. This is Chaperonin GroEL from Clostridium tetani (strain Massachusetts / E88).